A 906-amino-acid chain; its full sequence is Protein translocase subunit SecA (906 aa).

ATP is bound by residues Gln-87, Gly-105–Thr-109, and Asp-507. Positions 890, 892, 901, and 902 each coordinate Zn(2+).

Belongs to the SecA family. Monomer and homodimer. Part of the essential Sec protein translocation apparatus which comprises SecA, SecYEG and auxiliary proteins SecDF-YajC and YidC. The cofactor is Zn(2+).

The protein resides in the cell inner membrane. It localises to the cytoplasm. It carries out the reaction ATP + H2O + cellular proteinSide 1 = ADP + phosphate + cellular proteinSide 2.. Its function is as follows. Part of the Sec protein translocase complex. Interacts with the SecYEG preprotein conducting channel. Has a central role in coupling the hydrolysis of ATP to the transfer of proteins into and across the cell membrane, serving both as a receptor for the preprotein-SecB complex and as an ATP-driven molecular motor driving the stepwise translocation of polypeptide chains across the membrane. This Thiobacillus denitrificans (strain ATCC 25259 / T1) protein is Protein translocase subunit SecA.